The sequence spans 272 residues: Shikimate dehydrogenase (NADP(+)) (272 aa).

Residues 14-16 (SKS) and Thr61 contribute to the shikimate site. The active-site Proton acceptor is the Lys65. Glu77 serves as a coordination point for NADP(+). 2 residues coordinate shikimate: Asn86 and Asp102. Residues 126-130 (GAGGA), 149-154 (NRTVSR), and Met213 each bind NADP(+). Tyr215 is a binding site for shikimate. Position 237 (Gly237) interacts with NADP(+).

It belongs to the shikimate dehydrogenase family. Homodimer.

The enzyme catalyses shikimate + NADP(+) = 3-dehydroshikimate + NADPH + H(+). It functions in the pathway metabolic intermediate biosynthesis; chorismate biosynthesis; chorismate from D-erythrose 4-phosphate and phosphoenolpyruvate: step 4/7. Its function is as follows. Involved in the biosynthesis of the chorismate, which leads to the biosynthesis of aromatic amino acids. Catalyzes the reversible NADPH linked reduction of 3-dehydroshikimate (DHSA) to yield shikimate (SA). In Escherichia coli O81 (strain ED1a), this protein is Shikimate dehydrogenase (NADP(+)).